A 510-amino-acid chain; its full sequence is MAKPILLSISLCLVALVNGCLAQSGGRQQPRFGECKLKRLVALEPSNRIEAEAGVIESWDPNNQQFQCAGVAVVRRTIEPNGLLLPQYSNAPQLLYIVKGRGITGVLFPGCPETFEESQQGQSRIRPSLRSASFQRDRHQKIRHFREGDVIAFPAGVAHWCYNDGDTPVVAVALMDTTNNANQLDQNPRNFYLAGNPDDEFRPQGQQEYEQHRRQQQHQQRHGEPGQQQRGSGNNVFSGFDADFLADAFNVDTETARRLQSENDHRRSIVRVEGRQLQVIRPRWSREEQEREERKERERERESESERRQSRRGGRDDNGLEETICTLRLRENIGDPSRADIYTEEAGRISTANSHTLPVLRWLQLSAERGALYSDALYVPHWNLNAHSVVYALRGRAEVQVVDNFGQTVFDDELREGQLLTIPQNFAVVKRARNEGFEWVSFKTNENAMVSPLAGRTSAIRALPEEVLANALQIPREDARRLKFNRQESTLVRSRPSSSRSSRSERRAEV.

A signal peptide spans 1–23; it reads MAKPILLSISLCLVALVNGCLAQ. 2 cysteine pairs are disulfide-bonded: Cys35–Cys68 and Cys111–Cys325. In terms of domain architecture, Cupin type-1 1 spans 38 to 257; the sequence is KRLVALEPSN…AFNVDTETAR (220 aa). Disordered regions lie at residues 194-239 and 284-319; these read AGNP…VFSG and WSREEQEREERKERERERESESERRQSRRGGRDDNG. The span at 284–318 shows a compositional bias: basic and acidic residues; it reads WSREEQEREERKERERERESESERRQSRRGGRDDN. An NGXEET; peptidase recognition motif motif is present at residues 318 to 323; sequence NGLEET. One can recognise a Cupin type-1 2 domain in the interval 331 to 480; that stretch reads ENIGDPSRAD…ALQIPREDAR (150 aa). The segment at 487 to 510 is disordered; it reads QESTLVRSRPSSSRSSRSERRAEV.

This sequence belongs to the 11S seed storage protein (globulins) family. Homohexamer. Can assemble in other multimeric configurations. Post-translationally, proteolytically processed from a single precursor to produce an acidic and a basic chain that are linked by a disulfide bond. As to expression, expressed in endosperm of the seed.

Seed storage protein. This Juglans nigra (Black walnut) protein is 11S globulin.